Consider the following 360-residue polypeptide: Olfactory receptor 1L1 (360 aa).

The Extracellular segment spans residues 1–75 (MERNHNPDNC…GLSSRPEDQK (75 aa)). Asn-55 carries N-linked (GlcNAc...) asparagine glycosylation. The chain crosses the membrane as a helical span at residues 76–99 (PLFAVFLPIYLITVIGNLLIILAI). Residues 100 to 107 (RSDTRLQT) lie on the Cytoplasmic side of the membrane. A helical membrane pass occupies residues 108–129 (PMYFFLSILSFVDICYVTVIIP). The Extracellular portion of the chain corresponds to 130 to 150 (KMLVNFLSETKTISYSECLTQ). A disulfide bridge connects residues Cys-147 and Cys-239. A helical transmembrane segment spans residues 151-170 (MYFFLAFGNTDSYLLAAMAI). The Cytoplasmic segment spans residues 171–189 (DRYVAICNPFHYITIMSHR). The helical transmembrane segment at 190–208 (CCVLLLVLSFCIPHFHSLL) threads the bilayer. Residues 209–246 (HILLTNQLIFCASNVIHHFFCDDQPVLKLSCSSHFVKE) are Extracellular-facing. Residues 247 to 269 (ITVMTEGLAVIMTPFSCIIISYL) form a helical membrane-spanning segment. The Cytoplasmic portion of the chain corresponds to 270 to 286 (RILITVLKIPSAAGKRK). Residues 287–309 (AFSTCGSHLTVVTLFYGSISYLY) traverse the membrane as a helical segment. Over 310 to 321 (FQPLSNYTVKDQ) the chain is Extracellular. N-linked (GlcNAc...) asparagine glycosylation occurs at Asn-315. The chain crosses the membrane as a helical span at residues 322 to 341 (IATIIYTVLTPMLNPFIYSL). Over 342–360 (RNKDMKQGLAKLMHRMKCQ) the chain is Cytoplasmic.

This sequence belongs to the G-protein coupled receptor 1 family.

It is found in the cell membrane. Functionally, odorant receptor. The polypeptide is Olfactory receptor 1L1 (OR1L1) (Homo sapiens (Human)).